The primary structure comprises 106 residues: Putative regulatory protein MalR (106 aa).

Residues Cys-12 to Asn-106 form the HTH hxlR-type domain.

Potential regulator of the malBH genes. This is Putative regulatory protein MalR (malR) from Fusobacterium mortiferum.